Consider the following 123-residue polypeptide: Prismalin-14 (123 aa).

An N-terminal signal peptide occupies residues 1–16; it reads MRSLLVLLALAACASA.

As to expression, prismatic layer of shell (at protein level). Expressed primarily in the mantle with highest level in the mantle edge and lower level in the mantle pallium.

Its subcellular location is the secreted. In terms of biological role, may be involved in calcification of the prismatic layer of the shell. This chain is Prismalin-14, found in Margaritifera margaritifera (Freshwater pearl mussel).